The sequence spans 368 residues: Phospho-N-acetylmuramoyl-pentapeptide-transferase (368 aa).

10 helical membrane passes run 32-52 (TGGA…WIID), 79-99 (TPTM…VLWA), 102-122 (LNPY…IGFY), 140-160 (TRLL…IRLG), 176-196 (VVVD…VGAG), 207-227 (GLAI…AYLA), 247-267 (LAVL…FNAP), 271-291 (IFMG…IAVA), 296-316 (IVLA…IVQV), and 345-365 (QIVI…LSTL).

Belongs to the glycosyltransferase 4 family. MraY subfamily. The cofactor is Mg(2+).

Its subcellular location is the cell inner membrane. It carries out the reaction UDP-N-acetyl-alpha-D-muramoyl-L-alanyl-gamma-D-glutamyl-meso-2,6-diaminopimeloyl-D-alanyl-D-alanine + di-trans,octa-cis-undecaprenyl phosphate = di-trans,octa-cis-undecaprenyl diphospho-N-acetyl-alpha-D-muramoyl-L-alanyl-D-glutamyl-meso-2,6-diaminopimeloyl-D-alanyl-D-alanine + UMP. Its pathway is cell wall biogenesis; peptidoglycan biosynthesis. In terms of biological role, catalyzes the initial step of the lipid cycle reactions in the biosynthesis of the cell wall peptidoglycan: transfers peptidoglycan precursor phospho-MurNAc-pentapeptide from UDP-MurNAc-pentapeptide onto the lipid carrier undecaprenyl phosphate, yielding undecaprenyl-pyrophosphoryl-MurNAc-pentapeptide, known as lipid I. The polypeptide is Phospho-N-acetylmuramoyl-pentapeptide-transferase (Nitrobacter hamburgensis (strain DSM 10229 / NCIMB 13809 / X14)).